A 205-amino-acid chain; its full sequence is Holliday junction branch migration complex subunit RuvA (205 aa).

Residues 1 to 64 form a domain I region; sequence MIGRLRGVLI…EDAQLLYGFI (64 aa). A domain II region spans residues 65-143; that stretch reads TKQERSLFRL…SLMEASVGSE (79 aa). Residues 144–156 form a flexible linker region; the sequence is REFVLQSNYSPAP. A domain III region spans residues 157–205; sequence TVNSAEEDAISALISLGYKPPQASKAVSAAYKEGMDSETLIKAALKSML.

The protein belongs to the RuvA family. Homotetramer. Forms an RuvA(8)-RuvB(12)-Holliday junction (HJ) complex. HJ DNA is sandwiched between 2 RuvA tetramers; dsDNA enters through RuvA and exits via RuvB. An RuvB hexamer assembles on each DNA strand where it exits the tetramer. Each RuvB hexamer is contacted by two RuvA subunits (via domain III) on 2 adjacent RuvB subunits; this complex drives branch migration. In the full resolvosome a probable DNA-RuvA(4)-RuvB(12)-RuvC(2) complex forms which resolves the HJ.

The protein localises to the cytoplasm. The RuvA-RuvB-RuvC complex processes Holliday junction (HJ) DNA during genetic recombination and DNA repair, while the RuvA-RuvB complex plays an important role in the rescue of blocked DNA replication forks via replication fork reversal (RFR). RuvA specifically binds to HJ cruciform DNA, conferring on it an open structure. The RuvB hexamer acts as an ATP-dependent pump, pulling dsDNA into and through the RuvAB complex. HJ branch migration allows RuvC to scan DNA until it finds its consensus sequence, where it cleaves and resolves the cruciform DNA. This Shewanella sp. (strain MR-7) protein is Holliday junction branch migration complex subunit RuvA.